Reading from the N-terminus, the 254-residue chain is Hydroxypyruvate/pyruvate aldolase (254 aa).

His-47 functions as the Proton acceptor in the catalytic mechanism. 2 residues coordinate a divalent metal cation: Glu-151 and Asp-177.

The protein belongs to the HpcH/HpaI aldolase family. A divalent metal cation is required as a cofactor.

It carries out the reaction D-glyceraldehyde + pyruvate = 2-dehydro-3-deoxy-L-galactonate. Its function is as follows. Aldolase which can catalyze in vitro the aldolisation reaction between hydroxypyruvate (HPA) or pyruvate (PA) and D-glyceraldehyde (D-GA). The condensation of pyruvate and D-glyceraldehyde produces 2-dehydro-3-deoxy-L-galactonate as the major product. Has weak activity with hydroxypyruvate and D-glyceraldehyde. The protein is Hydroxypyruvate/pyruvate aldolase of Chromohalobacter salexigens (strain ATCC BAA-138 / DSM 3043 / CIP 106854 / NCIMB 13768 / 1H11).